A 313-amino-acid polypeptide reads, in one-letter code: Carbamate kinase 2 (313 aa).

Belongs to the carbamate kinase family.

Its subcellular location is the cytoplasm. It catalyses the reaction hydrogencarbonate + NH4(+) + ATP = carbamoyl phosphate + ADP + H2O + H(+). It functions in the pathway metabolic intermediate metabolism; carbamoyl phosphate degradation; CO(2) and NH(3) from carbamoyl phosphate: step 1/1. The chain is Carbamate kinase 2 (arcC2) from Staphylococcus aureus (strain USA300).